The following is a 113-amino-acid chain: T cell receptor alpha variable 36/delta variable 7 (113 aa).

Residues 1–21 form the signal peptide; sequence MMKCPQALLAIFWLLLSWVSS. An Ig-like domain is found at 23–113; it reads DKVVQSPLSL…DSAIYLCAVE (91 aa). N-linked (GlcNAc...) asparagine glycosylation is found at asparagine 43 and asparagine 96. Residues cysteine 44 and cysteine 110 are joined by a disulfide bond.

As to quaternary structure, alpha-beta TR is a heterodimer composed of an alpha and beta chain; disulfide-linked. The alpha-beta TR is associated with the transmembrane signaling CD3 coreceptor proteins to form the TR-CD3 (TcR or TCR). The assembly of alpha-beta TR heterodimers with CD3 occurs in the endoplasmic reticulum where a single alpha-beta TR heterodimer associates with one CD3D-CD3E heterodimer, one CD3G-CD3E heterodimer and one CD247 homodimer forming a stable octameric structure. CD3D-CD3E and CD3G-CD3E heterodimers preferentially associate with TR alpha and TR beta chains, respectively. The association of the CD247 homodimer is the last step of TcR assembly in the endoplasmic reticulum and is required for transport to the cell surface.

It is found in the cell membrane. V region of the variable domain of T cell receptor (TR) alpha chain that participates in the antigen recognition. Alpha-beta T cell receptors are antigen specific receptors which are essential to the immune response and are present on the cell surface of T lymphocytes. Recognize peptide-major histocompatibility (MH) (pMH) complexes that are displayed by antigen presenting cells (APC), a prerequisite for efficient T cell adaptive immunity against pathogens. Binding of alpha-beta TR to pMH complex initiates TR-CD3 clustering on the cell surface and intracellular activation of LCK that phosphorylates the ITAM motifs of CD3G, CD3D, CD3E and CD247 enabling the recruitment of ZAP70. In turn ZAP70 phosphorylates LAT, which recruits numerous signaling molecules to form the LAT signalosome. The LAT signalosome propagates signal branching to three major signaling pathways, the calcium, the mitogen-activated protein kinase (MAPK) kinase and the nuclear factor NF-kappa-B (NF-kB) pathways, leading to the mobilization of transcription factors that are critical for gene expression and essential for T cell growth and differentiation. The T cell repertoire is generated in the thymus, by V-(D)-J rearrangement. This repertoire is then shaped by intrathymic selection events to generate a peripheral T cell pool of self-MH restricted, non-autoaggressive T cells. Post-thymic interaction of alpha-beta TR with the pMH complexes shapes TR structural and functional avidity. The chain is T cell receptor alpha variable 36/delta variable 7 from Homo sapiens (Human).